A 719-amino-acid chain; its full sequence is Fatty acid oxidation complex subunit alpha (719 aa).

Residues 1-190 (MVYQGNRITV…KLGLVDATVA (190 aa)) form an enoyl-CoA hydratase/isomerase region. Asp-298 is a substrate binding site. A 3-hydroxyacyl-CoA dehydrogenase region spans residues 313-719 (HEINEAAVLG…AAGETFYATA (407 aa)). Residues Met-326, Asp-345, 402–404 (VVE), Lys-409, and Ser-431 each bind NAD(+). Catalysis depends on His-452, which acts as the For 3-hydroxyacyl-CoA dehydrogenase activity. Asn-455 lines the NAD(+) pocket. Substrate is bound at residue Asn-502.

This sequence in the N-terminal section; belongs to the enoyl-CoA hydratase/isomerase family. It in the C-terminal section; belongs to the 3-hydroxyacyl-CoA dehydrogenase family. Heterotetramer of two alpha chains (FadB) and two beta chains (FadA).

It catalyses the reaction a (3S)-3-hydroxyacyl-CoA + NAD(+) = a 3-oxoacyl-CoA + NADH + H(+). The enzyme catalyses a (3S)-3-hydroxyacyl-CoA = a (2E)-enoyl-CoA + H2O. The catalysed reaction is a 4-saturated-(3S)-3-hydroxyacyl-CoA = a (3E)-enoyl-CoA + H2O. It carries out the reaction (3S)-3-hydroxybutanoyl-CoA = (3R)-3-hydroxybutanoyl-CoA. It catalyses the reaction a (3Z)-enoyl-CoA = a 4-saturated (2E)-enoyl-CoA. The enzyme catalyses a (3E)-enoyl-CoA = a 4-saturated (2E)-enoyl-CoA. Its pathway is lipid metabolism; fatty acid beta-oxidation. In terms of biological role, involved in the aerobic and anaerobic degradation of long-chain fatty acids via beta-oxidation cycle. Catalyzes the formation of 3-oxoacyl-CoA from enoyl-CoA via L-3-hydroxyacyl-CoA. It can also use D-3-hydroxyacyl-CoA and cis-3-enoyl-CoA as substrate. The polypeptide is Fatty acid oxidation complex subunit alpha (Psychrobacter arcticus (strain DSM 17307 / VKM B-2377 / 273-4)).